We begin with the raw amino-acid sequence, 951 residues long: 2-oxoglutarate dehydrogenase E1 component (951 aa).

Residues 906-925 (RRRRSSPAEGNPTAHKQEQA) are disordered.

Belongs to the alpha-ketoglutarate dehydrogenase family. As to quaternary structure, homodimer. Part of the 2-oxoglutarate dehydrogenase (OGDH) complex composed of E1 (2-oxoglutarate dehydrogenase), E2 (dihydrolipoamide succinyltransferase) and E3 (dihydrolipoamide dehydrogenase); the complex contains multiple copies of the three enzymatic components (E1, E2 and E3). Thiamine diphosphate is required as a cofactor.

The catalysed reaction is N(6)-[(R)-lipoyl]-L-lysyl-[protein] + 2-oxoglutarate + H(+) = N(6)-[(R)-S(8)-succinyldihydrolipoyl]-L-lysyl-[protein] + CO2. Functionally, E1 component of the 2-oxoglutarate dehydrogenase (OGDH) complex which catalyzes the decarboxylation of 2-oxoglutarate, the first step in the conversion of 2-oxoglutarate to succinyl-CoA and CO(2). The sequence is that of 2-oxoglutarate dehydrogenase E1 component from Exiguobacterium sp. (strain ATCC BAA-1283 / AT1b).